The following is a 277-amino-acid chain: MARSSIEQLTSFLRSVNGRAKKALSQNFLVDGNILRKILTTAEVQPGDWVLEIGPGFGALSEVLLSQGANVIALEKDPMFEESLSQLPMDIEITDACKYPLTSLEDKGWKGKGRIVANLPYHITTPLLTKFFLECPYRWKTVTVMIQDEVARRITAKPGDKDYGSLTVFLSFFADVQYAFKVSPNCFYPKPSVHSAVVHMRVHEQFALADSEIEEFFTLTRAAFGQRRKLLANSLKNLYPKDKVFQVLEQLGFSEKTRPETIFLEEYLKIFHLLKDI.

Residues asparagine 27, leucine 29, glycine 54, glutamate 75, aspartate 95, and asparagine 118 each coordinate S-adenosyl-L-methionine.

The protein belongs to the class I-like SAM-binding methyltransferase superfamily. rRNA adenine N(6)-methyltransferase family. RsmA subfamily.

It is found in the cytoplasm. The catalysed reaction is adenosine(1518)/adenosine(1519) in 16S rRNA + 4 S-adenosyl-L-methionine = N(6)-dimethyladenosine(1518)/N(6)-dimethyladenosine(1519) in 16S rRNA + 4 S-adenosyl-L-homocysteine + 4 H(+). Functionally, specifically dimethylates two adjacent adenosines (A1518 and A1519) in the loop of a conserved hairpin near the 3'-end of 16S rRNA in the 30S particle. May play a critical role in biogenesis of 30S subunits. This is Ribosomal RNA small subunit methyltransferase A from Chlamydia trachomatis serovar L2 (strain ATCC VR-902B / DSM 19102 / 434/Bu).